The sequence spans 375 residues: Guanine nucleotide-binding protein subunit beta (375 aa).

7 WD repeats span residues 63-93 (GHTGKVYSLDWTPEKNRIVSASQDGRLIVWN), 105-135 (LPCAWVMTCAFSPSGQSVACGGLDSVCSIYN), 154-185 (GHKGYVSSCQYVPDEDTHLITSSGDQTCVLWD), 202-233 (GHTADVQSVSISSSNPRLFVSGSCDTTARLWD), 246-276 (GHEGDVNTVKFFPDGNRFGTGSEDGTCRLFD), 293-323 (GDIPHVTSMAFSISGRLLFVGYSNGDCYVWD), and 339-369 (SHEGRISCLGLSADGSALCTGSWDTNLKIWA).

It belongs to the WD repeat G protein beta family. In terms of assembly, g proteins are composed of 3 units, alpha, beta and gamma.

Functionally, guanine nucleotide-binding proteins (G proteins) are involved as a modulator or transducer in various transmembrane signaling systems. The beta and gamma chains are required for the GTPase activity, for replacement of GDP by GTP, and for G protein-effector interaction. The chain is Guanine nucleotide-binding protein subunit beta from Nicotiana tabacum (Common tobacco).